The chain runs to 118 residues: UPF0342 protein BPUM_0928 (118 aa).

This sequence belongs to the UPF0342 family.

This is UPF0342 protein BPUM_0928 from Bacillus pumilus (strain SAFR-032).